The chain runs to 190 residues: Selenoprotein S (190 aa).

Residues 28–48 (SLLASYGWYILFSCVLLYIVI) traverse the membrane as a helical segment. A VCP/p97-interacting motif (VIM) region spans residues 78-90 (RQEALAAARLRMQ). Residues 96-190 (QVEKHKEKQR…RRGPSSGGUS (95 aa)) form a disordered region. A compositionally biased stretch (basic and acidic residues) spans 97 to 118 (VEKHKEKQRQLEEEKRRQKIEM). The span at 160–174 (RGGGYNPLTGEGGGT) shows a compositional bias: gly residues. Residue Sec189 is a non-standard amino acid, selenocysteine.

The protein belongs to the selenoprotein S family. In terms of assembly, interacts with DERL1 and (via VIM motif) with VCP, suggesting that it forms a membrane complex with DERL1 that serves as a receptor for VCP. Also interacts with DERL2, DERL3 and SELENOK. The SELENOK-SELENOS complex interacts with VCP. Interacts with CCDC47. Truncated SELENOS proteins produced by failed UGA/Sec decoding are ubiquitinated by the CRL2(KLHDC2) and CRL2(KLHDC3) complexes, which recognizes the glycine (Gly) at the C-terminus of truncated SELENOS proteins. Truncated SELENOS proteins produced by failed UGA/Sec decoding are also ubiquitinated by the CRL5(KLHDC1) complex.

Its subcellular location is the endoplasmic reticulum membrane. It localises to the cytoplasm. In terms of biological role, involved in the degradation process of misfolded endoplasmic reticulum (ER) luminal proteins. Participates in the transfer of misfolded proteins from the ER to the cytosol, where they are destroyed by the proteasome in a ubiquitin-dependent manner. Probably acts by serving as a linker between DERL1, which mediates the retrotranslocation of misfolded proteins into the cytosol, and the ATPase complex VCP, which mediates the translocation and ubiquitination. This is Selenoprotein S from Rattus norvegicus (Rat).